The primary structure comprises 561 residues: Oligo-1,6-glucosidase 1 (561 aa).

Residues D20, N22, D24, F26, and D28 each coordinate Ca(2+). D199 acts as the Nucleophile in catalysis. E255 serves as the catalytic Proton donor.

This sequence belongs to the glycosyl hydrolase 13 family.

It is found in the cytoplasm. It carries out the reaction Hydrolysis of (1-&gt;6)-alpha-D-glucosidic linkages in some oligosaccharides produced from starch and glycogen by alpha-amylase, and in isomaltose.. Functionally, hydrolyzes various disaccharides such as sucrose, maltose, and isomaltose with different efficiencies. Also hydrolyzes longer maltodextrins from maltotriose up to maltohexaose, but not maltoheptaose, palatinose, isomaltotriose, or isomaltotetraose. This Bacillus subtilis (strain 168) protein is Oligo-1,6-glucosidase 1 (malL).